A 211-amino-acid polypeptide reads, in one-letter code: ATP phosphoribosyltransferase (211 aa).

It belongs to the ATP phosphoribosyltransferase family. Short subfamily. Heteromultimer composed of HisG and HisZ subunits.

The protein localises to the cytoplasm. The catalysed reaction is 1-(5-phospho-beta-D-ribosyl)-ATP + diphosphate = 5-phospho-alpha-D-ribose 1-diphosphate + ATP. It participates in amino-acid biosynthesis; L-histidine biosynthesis; L-histidine from 5-phospho-alpha-D-ribose 1-diphosphate: step 1/9. Functionally, catalyzes the condensation of ATP and 5-phosphoribose 1-diphosphate to form N'-(5'-phosphoribosyl)-ATP (PR-ATP). Has a crucial role in the pathway because the rate of histidine biosynthesis seems to be controlled primarily by regulation of HisG enzymatic activity. The polypeptide is ATP phosphoribosyltransferase (Pseudomonas syringae pv. syringae (strain B728a)).